A 196-amino-acid chain; its full sequence is Shikimate kinase (196 aa).

Residue G32 to A37 participates in ATP binding. Residue S36 participates in Mg(2+) binding. D54, R78, and G100 together coordinate substrate. R138 is an ATP binding site. R157 serves as a coordination point for substrate. ATP is bound at residue R174.

This sequence belongs to the shikimate kinase family. Monomer. Mg(2+) serves as cofactor.

It is found in the cytoplasm. It carries out the reaction shikimate + ATP = 3-phosphoshikimate + ADP + H(+). It functions in the pathway metabolic intermediate biosynthesis; chorismate biosynthesis; chorismate from D-erythrose 4-phosphate and phosphoenolpyruvate: step 5/7. In terms of biological role, catalyzes the specific phosphorylation of the 3-hydroxyl group of shikimic acid using ATP as a cosubstrate. This chain is Shikimate kinase, found in Rhizobium leguminosarum bv. trifolii (strain WSM2304).